The primary structure comprises 215 residues: LysM and putative peptidoglycan-binding domain-containing protein 1 (215 aa).

The region spanning 37-81 (LEHQVQPGDTLQGLALRYGVSMEQIKRANRLYTNDSIFLKKSLYI) is the LysM domain. 2 stretches are compositionally biased toward polar residues: residues 86-103 (GQSDLSDDQNSQEGSETE) and 173-189 (GNRTPSRQNSPQTQQRS). 2 disordered regions span residues 86–133 (GQSD…PVDF) and 148–203 (AVKK…TRAS).

The polypeptide is LysM and putative peptidoglycan-binding domain-containing protein 1 (lysmd1) (Xenopus laevis (African clawed frog)).